The primary structure comprises 460 residues: ATP synthase subunit beta (460 aa).

Residue 150–157 (GGAGVGKT) coordinates ATP.

It belongs to the ATPase alpha/beta chains family. F-type ATPases have 2 components, CF(1) - the catalytic core - and CF(0) - the membrane proton channel. CF(1) has five subunits: alpha(3), beta(3), gamma(1), delta(1), epsilon(1). CF(0) has three main subunits: a(1), b(2) and c(9-12). The alpha and beta chains form an alternating ring which encloses part of the gamma chain. CF(1) is attached to CF(0) by a central stalk formed by the gamma and epsilon chains, while a peripheral stalk is formed by the delta and b chains.

It localises to the cell inner membrane. It carries out the reaction ATP + H2O + 4 H(+)(in) = ADP + phosphate + 5 H(+)(out). Produces ATP from ADP in the presence of a proton gradient across the membrane. The catalytic sites are hosted primarily by the beta subunits. The chain is ATP synthase subunit beta from Enterobacter sp. (strain 638).